Consider the following 234-residue polypeptide: FAS1 domain-containing protein AFUA_8G05360 (234 aa).

The first 21 residues, 1–21, serve as a signal peptide directing secretion; sequence MRRTLFVLFVVAFCFIGSVIA. Positions 83-231 constitute an FAS1 domain; it reads KPVVSDVLPK…GELWILNSVL (149 aa).

Its subcellular location is the vacuole. The chain is FAS1 domain-containing protein AFUA_8G05360 from Aspergillus fumigatus (strain ATCC MYA-4609 / CBS 101355 / FGSC A1100 / Af293) (Neosartorya fumigata).